A 438-amino-acid chain; its full sequence is Adenylosuccinate synthetase (438 aa).

GTP contacts are provided by residues 13–19 and 41–43; these read GDEGKGK and GHT. Residue Asp14 is the Proton acceptor of the active site. Residues Asp14 and Gly41 each coordinate Mg(2+). Residues 14 to 17, 39 to 42, Thr130, Arg144, Gln225, Thr240, and Arg310 each bind IMP; these read DEGK and NAGH. His42 acts as the Proton donor in catalysis. Residue 306-312 coordinates substrate; the sequence is ATTGRLR. Residues Arg312, 338–340, and 421–423 contribute to the GTP site; these read KLD and STG.

Belongs to the adenylosuccinate synthetase family. In terms of assembly, homodimer. It depends on Mg(2+) as a cofactor.

Its subcellular location is the cytoplasm. The enzyme catalyses IMP + L-aspartate + GTP = N(6)-(1,2-dicarboxyethyl)-AMP + GDP + phosphate + 2 H(+). It participates in purine metabolism; AMP biosynthesis via de novo pathway; AMP from IMP: step 1/2. Plays an important role in the de novo pathway of purine nucleotide biosynthesis. Catalyzes the first committed step in the biosynthesis of AMP from IMP. The protein is Adenylosuccinate synthetase of Vibrio parahaemolyticus serotype O3:K6 (strain RIMD 2210633).